We begin with the raw amino-acid sequence, 419 residues long: L-rhamnose isomerase (419 aa).

The Mn(2+) site is built by His262, Asp294, and Asp296.

It belongs to the rhamnose isomerase family. Homotetramer. It depends on Mn(2+) as a cofactor.

Its subcellular location is the cytoplasm. The catalysed reaction is L-rhamnopyranose = L-rhamnulose. It participates in carbohydrate degradation; L-rhamnose degradation; glycerone phosphate from L-rhamnose: step 1/3. Functionally, catalyzes the interconversion of L-rhamnose and L-rhamnulose. The sequence is that of L-rhamnose isomerase from Salmonella choleraesuis (strain SC-B67).